The sequence spans 264 residues: Phosphonoacetaldehyde hydrolase (264 aa).

Asp9 serves as the catalytic Nucleophile. Mg(2+) is bound by residues Asp9 and Ala11. Lys50 functions as the Schiff-base intermediate with substrate in the catalytic mechanism. Residue Asp183 coordinates Mg(2+).

It belongs to the HAD-like hydrolase superfamily. PhnX family. As to quaternary structure, homodimer. Requires Mg(2+) as cofactor.

It carries out the reaction phosphonoacetaldehyde + H2O = acetaldehyde + phosphate + H(+). Functionally, involved in phosphonate degradation. This Bacillus anthracis protein is Phosphonoacetaldehyde hydrolase.